We begin with the raw amino-acid sequence, 562 residues long: Protein wntless (562 aa).

Topologically, residues 1-13 (MSGTILENLSGRK) are cytoplasmic. Residues 14 to 34 (LSILVTTLLLCQVLCFLLGGL) form a helical membrane-spanning segment. The Lumenal portion of the chain corresponds to 35–239 (YAPLPAGHVT…AIHQNGGFTQ (205 aa)). A glycan (N-linked (GlcNAc...) asparagine) is linked at Asn-58. Residues 240 to 260 (IWLLLKTVLFPFVVGIMIWFW) traverse the membrane as a helical segment. The Cytoplasmic portion of the chain corresponds to 261–270 (RRVHLLQRSP). Residues 271 to 291 (ALLEYMLIYLGAALTFLNLPL) traverse the membrane as a helical segment. The Lumenal segment spans residues 292–311 (EYLSLVFEMPYMLLLSDIRQ). A helical membrane pass occupies residues 312–332 (GIFYAMLLTFWLVFAGEHMLI). Residues 333 to 344 (QDAPNKSTIRSR) lie on the Cytoplasmic side of the membrane. The helical transmembrane segment at 345–365 (YWKHLSAVVVGCISLFVFDIC) threads the bilayer. Topologically, residues 366–390 (ERGVQLRNPFYSIWAMPLAAKMAMT) are lumenal. The helical transmembrane segment at 391–411 (FIVLAGVSAAIYFLFLCYMIW) threads the bilayer. Topologically, residues 412–441 (KVFRNIGDKRTSLPSMSQARRLHYESLIYR) are cytoplasmic. A helical transmembrane segment spans residues 442-462 (FKFLMLATIVCAALTVTGFIM). Over 463–482 (GQRAEGQWDWNDNVAIQPTS) the chain is Lumenal. Residues 483 to 503 (AFLTGVYGMWNIYIFALLILY) traverse the membrane as a helical segment. Over 504–562 (APSHKQWPTMHHSDETTQSNENIVASAASEEIEFSHLPSDSNPSEISSLTSFTRKVAFD) the chain is Cytoplasmic. The tract at residues 539 to 562 (HLPSDSNPSEISSLTSFTRKVAFD) is disordered. Residues 541–556 (PSDSNPSEISSLTSFT) are compositionally biased toward polar residues.

Belongs to the wntless family. Interacts with wg; in the Golgi. Interacts with Vps35, a component of the retromer complex; wls stability is regulated by Vps35.

The protein localises to the presynaptic cell membrane. The protein resides in the postsynaptic cell membrane. It is found in the cell membrane. It localises to the endoplasmic reticulum membrane. Its subcellular location is the endosome membrane. The protein localises to the golgi apparatus membrane. A segment polarity gene required for wingless (wg)-dependent patterning processes, acting in both wg-sending cells and wg-target cells. In non-neuronal cells wls directs wg secretion. The wls traffic loop encompasses the Golgi, the cell surface, an endocytic compartment and a retrograde route leading back to the Golgi, and involves clathrin-mediated endocytosis and the retromer complex (a conserved protein complex consisting of Vps35 and Vps26). In neuronal cells (the larval motorneuron NMJ), the wg signal moves across the synapse via the release of wls-containing exosome-like vesicles. Postsynaptic wls is required for the trafficking of fz2 through the fz2-interacting protein Grip. The polypeptide is Protein wntless (Drosophila erecta (Fruit fly)).